Here is a 255-residue protein sequence, read N- to C-terminus: tRNA (guanine-N(7)-)-methyltransferase (255 aa).

The interval 1 to 29 is disordered; sequence MMHDDPNEAGLPPDDAALPDEAADGADEV. Residues 17 to 27 show a composition bias toward acidic residues; that stretch reads ALPDEAADGAD. Positions 86, 111, 138, and 161 each coordinate S-adenosyl-L-methionine. The active site involves Asp161. Residues Lys165, Asp197, and 232–235 each bind substrate; that span reads TKFE.

Belongs to the class I-like SAM-binding methyltransferase superfamily. TrmB family.

It catalyses the reaction guanosine(46) in tRNA + S-adenosyl-L-methionine = N(7)-methylguanosine(46) in tRNA + S-adenosyl-L-homocysteine. Its pathway is tRNA modification; N(7)-methylguanine-tRNA biosynthesis. Its function is as follows. Catalyzes the formation of N(7)-methylguanine at position 46 (m7G46) in tRNA. This is tRNA (guanine-N(7)-)-methyltransferase from Burkholderia ambifaria (strain ATCC BAA-244 / DSM 16087 / CCUG 44356 / LMG 19182 / AMMD) (Burkholderia cepacia (strain AMMD)).